Reading from the N-terminus, the 1558-residue chain is ABC transporter NFT1 (1558 aa).

Topologically, residues 1–29 (MIKNGTCPFWERDDLSECARREYIEFKFP) are extracellular. N-linked (GlcNAc...) asparagine glycosylation occurs at asparagine 4. Residues 30–50 (LFILLTGMIYAFCKVFRAFYL) traverse the membrane as a helical segment. The Cytoplasmic portion of the chain corresponds to 51–103 (RRKNHTNEAPEFEEQGNGNHEYARFSVLRLKSAWESRSFCNVNNRSTFDKFKK). A helical transmembrane segment spans residues 104–124 (FIEGAFIVLQLTIHLYILSNM). Over 125-130 (PMDNKK) the chain is Extracellular. A helical transmembrane segment spans residues 131–151 (FFHQGFLVQMFLWILLLVVIT). The Cytoplasmic portion of the chain corresponds to 152–169 (LRLISASQSFRWVLACKR). Residues 170–190 (DLWAVSFYSYASLFTLSILPL) form a helical membrane-spanning segment. Residues 191–201 (RSVFIGKIKDK) lie on the Extracellular side of the membrane. The helical transmembrane segment at 202–222 (IMVKYIISETFIDLALLLLLS) threads the bilayer. The Cytoplasmic segment spans residues 223–302 (TSSIEGTRYS…SSKKGRLLPN (80 aa)). A helical membrane pass occupies residues 303-323 (IICYFKAVFISQLFLAFVSSF). Residues 311-621 (FISQLFLAFV…IASTVSLLIQ (311 aa)) enclose the ABC transmembrane type-1 1 domain. Over 324–351 (LNFVPSLLMPRILSYVNDPKSQSWNLVS) the chain is Extracellular. Residues 352-374 (LYVSSMLVSKIIATTCRGQGLFL) traverse the membrane as a helical segment. At 375 to 449 (GEKGTMQLRT…VMSIDAFKVS (75 aa)) the chain is on the cytoplasmic side. The segment at 410–434 (NASTSFEENPDSSEAEPRKKSSRKD) is disordered. The segment covering 424–434 (AEPRKKSSRKD) has biased composition (basic and acidic residues). A helical transmembrane segment spans residues 450–470 (EAMNTFYLACEAVFMTVTALM). Topologically, residues 471–481 (ILYSLLGWSAF) are extracellular. Residues 482-504 (AGTFALLAMIPLNFWCATFYGNY) form a helical membrane-spanning segment. Residues 505–558 (QADQLILTDKRTSGISEALNSIRVIKLLAWENLFYQKIINVRDGEIRLLKKKAT) lie on the Cytoplasmic side of the membrane. Residues 559-579 (IFFLNHLIWFFGPTLVSAITF) traverse the membrane as a helical segment. Topologically, residues 580 to 584 (SVFIK) are extracellular. The helical transmembrane segment at 585–605 (FQNQTLTPTIAFTALSLFAIL) threads the bilayer. Topologically, residues 606 to 953 (RTPMDQIAST…KFSAYKWLAD (348 aa)) are cytoplasmic. The ABC transporter 1 domain maps to 651 to 892 (FGFEDASMEW…NEFLRESINN (242 aa)). Residue 686–693 (GPTGSGKS) coordinates ATP. Over residues 892–901 (NDSKNTTHNQ) the composition is skewed to polar residues. The tract at residues 892–926 (NDSKNTTHNQIDLKRSTTSKKTKNGDPEGENSQDE) is disordered. The chain crosses the membrane as a helical span at residues 954 to 974 (YFGGLGVVFVFTSSAILIHGI). The ABC transmembrane type-1 2 domain occupies 961–1251 (VFVFTSSAIL…IIKVFSSVEL (291 aa)). Residues 975–1013 (TLSQGFWLRYWLETGSSGSKSTWLYRIVEGHSNIYFILT) are Extracellular-facing. Residues 1014–1034 (YIVIGFVSSFLTSGKVWIAII) traverse the membrane as a helical segment. Residues 1035–1082 (SGTNVTKKIFAKLLSSILYAKLRFHNVTPTGRIMNRFSKDMDIIDQQL) are Cytoplasmic-facing. A helical membrane pass occupies residues 1083–1105 (IPNFEGLSYSVVVCLWIILLIGY). At 1106–1109 (VTPQ) the chain is on the extracellular side. A helical membrane pass occupies residues 1110–1132 (FLLFAIPLCALYYTVCTLYLRAS). The Cytoplasmic portion of the chain corresponds to 1133-1199 (RELKRIDNIN…ATEWITYRVD (67 aa)). Residues 1200–1220 (IIGTLVLFSSSVMIIMKASYL) traverse the membrane as a helical segment. Residues 1221-1222 (DA) lie on the Extracellular side of the membrane. A helical transmembrane segment spans residues 1223-1243 (GLAGILLSNAFSFTETAQWII). The Cytoplasmic portion of the chain corresponds to 1244–1558 (KVFSSVELLM…LAKVSFDNKR (315 aa)). An ABC transporter 2 domain is found at 1285 to 1538 (VELKNLSLRY…RNTIFYRLCR (254 aa)). An ATP-binding site is contributed by 1319 to 1326 (GRTGAGKS).

Belongs to the ABC transporter superfamily. ABCC family. Conjugate transporter (TC 3.A.1.208) subfamily.

The protein resides in the membrane. This is ABC transporter NFT1 (NFT1) from Saccharomyces cerevisiae (strain YJM789) (Baker's yeast).